A 330-amino-acid polypeptide reads, in one-letter code: Beta-ketoacyl-[acyl-carrier-protein] synthase III 2 (330 aa).

Residues Cys-118 and His-246 contribute to the active site. The tract at residues 247–251 (QANLR) is ACP-binding. Asn-276 is an active-site residue.

Belongs to the thiolase-like superfamily. FabH family. As to quaternary structure, homodimer.

Its subcellular location is the cytoplasm. It catalyses the reaction malonyl-[ACP] + acetyl-CoA + H(+) = 3-oxobutanoyl-[ACP] + CO2 + CoA. Its pathway is lipid metabolism; fatty acid biosynthesis. Functionally, catalyzes the condensation reaction of fatty acid synthesis by the addition to an acyl acceptor of two carbons from malonyl-ACP. Catalyzes the first condensation reaction which initiates fatty acid synthesis and may therefore play a role in governing the total rate of fatty acid production. Possesses both acetoacetyl-ACP synthase and acetyl transacylase activities. Its substrate specificity determines the biosynthesis of branched-chain and/or straight-chain of fatty acids. In Streptomyces coelicolor (strain ATCC BAA-471 / A3(2) / M145), this protein is Beta-ketoacyl-[acyl-carrier-protein] synthase III 2.